The following is a 491-amino-acid chain: MAICNFFLQGRCRYGEKCWNEHPRGGGGGGGNRYQSQNRYQEQSRYQEQSRYPEQSRYPEQNRYQEPAGNAKGTWGASSQRYVQPSNFSKSTTWINRDSEKPSAGSFSGFGSRNVKSTAATGLPSTQNRFAALSSQDNSRDGQTDKGNILDDIMKDMEIWESSGQWMFSVYSMLKEKKNISGFTDFSPEELRLEYSVCQAEGNPLKYINAVQQLGSKWKQRILELKNPNPSIKTALLNELNSPSPDVTPGYSGQQNSAFGALSFPTSNTAPTAVTFSFKADTTTAAKPAVPNALAGSDFSAFGNKPTSAPSFGSGVAAAAASFSFAPSTISGFGSTASNSGFGAASNAAGFQGAANIAAAPAFGVASSTAPASGFGGGFGTTVNTGAKTSSVRDLFSAGTAVPVQTTLLFGQATGSLNTTASSTSLAGQPFKASTSATAVSGSFTSDNTSNPLFTPRNELSVEDLAQFEAKQFTLGKTPIKPPSADLLKVT.

The C3H1-type zinc-finger motif lies at 1 to 25; sequence MAICNFFLQGRCRYGEKCWNEHPRG. 2 disordered regions span residues 23–82 and 92–111; these read PRGG…SQRY and TTWINRDSEKPSAGSFSGFG. Polar residues predominate over residues 33 to 64; the sequence is RYQSQNRYQEQSRYQEQSRYPEQSRYPEQNRY. 10 FG repeats span residues 110 to 111, 259 to 260, 302 to 303, 312 to 313, 333 to 334, 342 to 343, 363 to 364, 375 to 376, 379 to 380, and 410 to 411; these read FG.

Probable component of the nuclear pore complex (NPC).

It is found in the nucleus. The protein localises to the nuclear pore complex. The protein resides in the nucleus membrane. In terms of biological role, required for the export of mRNAs containing poly(A) tails from the nucleus into the cytoplasm. The protein is Nucleoporin NUP42 (nup42) of Xenopus laevis (African clawed frog).